The sequence spans 467 residues: Squalene synthase (467 aa).

Belongs to the phytoene/squalene synthase family. It depends on Mg(2+) as a cofactor.

It carries out the reaction 2 (2E,6E)-farnesyl diphosphate + NADPH + H(+) = squalene + 2 diphosphate + NADP(+). The catalysed reaction is 2 (2E,6E)-farnesyl diphosphate + NADH + H(+) = squalene + 2 diphosphate + NAD(+). Its pathway is terpene metabolism; lanosterol biosynthesis; lanosterol from farnesyl diphosphate: step 1/3. Its function is as follows. Squalene synthase; part of the third module of ergosterol biosynthesis pathway that includes the late steps of the pathway. The third module or late pathway involves the ergosterol synthesis itself through consecutive reactions that mainly occur in the endoplasmic reticulum (ER) membrane. Firstly, the squalene synthase SQS catalyzes the condensation of 2 farnesyl pyrophosphate moieties to form squalene, which is the precursor of all steroids. Secondly, the squalene epoxidase catalyzes the stereospecific oxidation of squalene to (S)-2,3-epoxysqualene, which is considered to be a rate-limiting enzyme in steroid biosynthesis. Then, the lanosterol synthase LS catalyzes the cyclization of (S)-2,3 oxidosqualene to lanosterol, a reaction that forms the sterol core. In the next steps, lanosterol is transformed to ergosterol via a complex process involving various demethylation, reduction and desaturation reactions. Lanosterol is also an intermediate in the biosynthesis of triterpenes such as ganoderic acids (GA), a group of highly oxygenated lanostane-type triterpenoids which are well recognized as a main group of unique bioactive compounds in the medicinal mushroom Ganoderma lucidum. This Ganoderma lucidum (Ling zhi medicinal fungus) protein is Squalene synthase.